A 390-amino-acid chain; its full sequence is S-adenosylmethionine synthase 2 (390 aa).

Residue E9 coordinates Mg(2+). H15 serves as a coordination point for ATP. E43 contacts K(+). L-methionine-binding residues include E56 and Q99. Residues 167-169 (DGK), 235-238 (SGRF), D246, 252-253 (RK), A269, K273, and K277 contribute to the ATP site. D246 contributes to the L-methionine binding site. K277 is an L-methionine binding site.

This sequence belongs to the AdoMet synthase family. As to quaternary structure, homotetramer. It depends on Mn(2+) as a cofactor. Mg(2+) serves as cofactor. The cofactor is Co(2+). Requires K(+) as cofactor.

It is found in the cytoplasm. The enzyme catalyses L-methionine + ATP + H2O = S-adenosyl-L-methionine + phosphate + diphosphate. It participates in amino-acid biosynthesis; S-adenosyl-L-methionine biosynthesis; S-adenosyl-L-methionine from L-methionine: step 1/1. Functionally, catalyzes the formation of S-adenosylmethionine from methionine and ATP. The reaction comprises two steps that are both catalyzed by the same enzyme: formation of S-adenosylmethionine (AdoMet) and triphosphate, and subsequent hydrolysis of the triphosphate. The polypeptide is S-adenosylmethionine synthase 2 (SAM2) (Petunia hybrida (Petunia)).